The primary structure comprises 372 residues: Ciliary neurotrophic factor receptor subunit alpha (372 aa).

A signal peptide spans 1–22 (MAASVPWACCAVLAAAAAAVYT). The Ig-like C2-type domain maps to 27 to 104 (PQEAPHVQYE…WHLRHQVLLH (78 aa)). Cys46 and Cys89 are oxidised to a cystine. 5 N-linked (GlcNAc...) asparagine glycosylation sites follow: Asn60, Asn70, Asn142, Asn190, and Asn261. Fibronectin type-III domains follow at residues 108–205 (PPRE…VKPD) and 206–306 (PPEN…TEEP). The WSXWS motif motif lies at 290–294 (WSDWS). Residues 301–339 (PWTEEPRHLTTEAQAPETTTSTTSSLAPPPTTKICDPGE) form a disordered region. A compositionally biased stretch (low complexity) spans 311–326 (TEAQAPETTTSTTSSL). Ser342 carries the GPI-anchor amidated serine lipid modification. A propeptide spans 343 to 372 (GGGPSIPFLTSVPVTLVLAAAAATANNLLI) (removed in mature form).

Belongs to the type I cytokine receptor family. Type 3 subfamily. Forms a heterotrimer with LIFR and IL6ST. Interacts with heterodimeric neurotropic cytokine composed of CLCF1/CLC and CRLF1/CLF-1. Either alone or in complex with the heterodimer CLCF1-CRLF1 interacts with SORL1; this interaction may promote internalization and lysosomal degradation. Nervous system.

The protein resides in the cell membrane. Binds to CNTF. The alpha subunit provides the receptor specificity. The sequence is that of Ciliary neurotrophic factor receptor subunit alpha (Cntfr) from Rattus norvegicus (Rat).